Reading from the N-terminus, the 337-residue chain is Protein FAM169B (337 aa).

The segment at 278-326 (STVHPKCSEEDTDTPGQASQEDGPTQFNHGESHKEWAVGEPERTQNGRR) is disordered. A compositionally biased stretch (polar residues) spans 291–306 (TPGQASQEDGPTQFNH). A compositionally biased stretch (basic and acidic residues) spans 307 to 322 (GESHKEWAVGEPERTQ).

This sequence belongs to the FAM169 family.

This is Protein FAM169B (Fam169b) from Mus musculus (Mouse).